A 156-amino-acid chain; its full sequence is Putative pre-16S rRNA nuclease (156 aa).

This sequence belongs to the YqgF nuclease family.

It localises to the cytoplasm. Its function is as follows. Could be a nuclease involved in processing of the 5'-end of pre-16S rRNA. The chain is Putative pre-16S rRNA nuclease from Albidiferax ferrireducens (strain ATCC BAA-621 / DSM 15236 / T118) (Rhodoferax ferrireducens).